The chain runs to 433 residues: Oxaloacetate decarboxylase beta chain 2 (433 aa).

The next 10 helical transmembrane spans lie at 16-36 (LGAG…LAIA), 42-62 (LLLL…AGMA), 122-142 (VLAL…VIFM), 168-188 (FGIF…LIAF), 190-210 (LPQA…AIYL), 216-236 (PELL…VPLI), 266-286 (ILFP…AAPL), 311-331 (NGLI…KLVA), 340-360 (LGIL…GVLM), and 413-433 (VAGV…VLAM).

The protein belongs to the GcdB/MmdB/OadB family. Heterotrimer of an alpha, a beta and a gamma subunit. Requires Na(+) as cofactor.

The protein localises to the cell membrane. It carries out the reaction oxaloacetate + 2 Na(+)(in) + H(+) = pyruvate + 2 Na(+)(out) + CO2. Catalyzes the decarboxylation of oxaloacetate coupled to Na(+) translocation. This is Oxaloacetate decarboxylase beta chain 2 (oadB2) from Salmonella typhi.